The primary structure comprises 733 residues: MSLILDDIILSLTNANERTPPQALKTTLSLLYEKSKQYGLSSPQLQALVRLLCETSIIDTVTKVYIVENCFLPDGYLTKELLLEIINHLGTPTVFSRYRIQTPPVLQSALCKWLVHVYFLFPVHSEREHNISSSIWLHLWQFSFLQKWITPLVIWQATTPVDVKPWKLSIIKRCAMHPGYRDAPGSATLILQRFQCLVGASSQITESIITINCNRKTLKSHRNLKLDAHFLSILKRILSRAHPANFPADTVQNTIDMYLSEIHQLGADSIYPLRLQSLPEYVPSDSTVSLWDVTSLEQLAQNWPQLHIPNDVDYMMKPSLNSNVLLPRKVMSRDSLKHLYSSIILIKNSRDESSSPYEWCIWQLKRCFAHQIETPQEVIPIIISVSSMDNKLSSRIIQTFCNLKYLKLDELTLKKVCGGILPLWKPELISGTREFFVKFMASIFMWSTRDGHDNNCTFSETCFYVLQMITNWVLDDKLIALGLTLLHDMQSLLTLDKIFNNATSNRFSTMAFISSLDILTQLSKQTKSDYAIQYLIVGPDIMNKVFSSDDPLLLSAACRYLVATKNKLMQYPSTNKFVRMQNQYIMDLTNYLYRNKVLSSKSLFGVSPDFFKQILENLYIPTADFKNAKFFTITGIPALSYICIIILRRLETAENTKIKFTSGIINEETFNNFFRVHHDEIGQHGWIKGVNNIHDLRVKILMHLSNTANPYRDIAAFLFTYLKSLSKYSVQNS.

Ser-2 carries the post-translational modification N-acetylserine.

Belongs to the CENP-I/CTF3 family. In terms of assembly, component of the heterotrimeric kinetochore subcomplex CTF3, which consists of CTF3, MCM16 and MCM22. The CTF3 subcomplex is part of a larger constitutive centromere-associated network (CCAN) (also known as central kinetochore CTF19 complex in yeast), which is composed of at least AME1, CHL4, CNN1, CTF3, CTF19, IML3, MCM16, MCM21, MCM22, MHF1, MHF2, MIF2, NKP1, NKP2, OKP1 and WIP1. Interacts with CTF19. Interacts with CHL4.

The protein resides in the nucleus. It localises to the chromosome. It is found in the centromere. The protein localises to the kinetochore. Its function is as follows. Component of the central kinetochore, which mediates the attachment of the centromere to the mitotic spindle by forming essential interactions between the microtubule-associated outer kinetochore proteins and the centromere-associated inner kinetochore proteins. Required for establishing bipolar spindle-microtubule attachments and proper chromosome segregation. Functionally, component of the kinetochore, a multiprotein complex that assembles on centromeric DNA and attaches chromosomes to spindle microtubules, mediating chromosome segregation and sister chromatid segregation during meiosis and mitosis. Component of the inner kinetochore constitutive centromere-associated network (CCAN), which serves as a structural platform for outer kinetochore assembly. This is Inner kinetochore subunit CTF3 (CTF3) from Saccharomyces cerevisiae (strain ATCC 204508 / S288c) (Baker's yeast).